The chain runs to 99 residues: Large ribosomal subunit protein bL27 (99 aa).

Positions 1–9 (MLIMNLQLF) are excised as a propeptide.

Belongs to the bacterial ribosomal protein bL27 family. Post-translationally, the N-terminus is cleaved by ribosomal processing cysteine protease Prp.

In Clostridium beijerinckii (strain ATCC 51743 / NCIMB 8052) (Clostridium acetobutylicum), this protein is Large ribosomal subunit protein bL27.